A 301-amino-acid polypeptide reads, in one-letter code: MEFVLLGFSDIPNLHWMLFSIFLLMYLMILMCNGIIILLIKIHPALQTPMYFFLSNFSLLEICYVTIIIPRMLMDIWTQKGNISLFACATQMCFFLMLGGTECLLLTVMAYDRYVAICKPLQYPLVMNHKVCIQLIIASWTITIPVVIGETCQIFLLPFCGTNTINHFFCDIPPILKLACGNIFVNEITVHVVAVVFITVPFLLIVVSYGKIISNILKLSSARGKAKAFSTCSSHLIVVILFFGAGTITYLQPKPHQFQRMGKLISLFYTILIPTLNPIIYTLRNKDIMVALRKLLAKLLT.

Over 1–16 (MEFVLLGFSDIPNLHW) the chain is Extracellular. A helical transmembrane segment spans residues 17–37 (MLFSIFLLMYLMILMCNGIII). The Cytoplasmic segment spans residues 38-45 (LLIKIHPA). Residues 46 to 66 (LQTPMYFFLSNFSLLEICYVT) form a helical membrane-spanning segment. Over 67-90 (IIIPRMLMDIWTQKGNISLFACAT) the chain is Extracellular. N-linked (GlcNAc...) asparagine glycosylation occurs at asparagine 82. An intrachain disulfide couples cysteine 88 to cysteine 180. A helical transmembrane segment spans residues 91–111 (QMCFFLMLGGTECLLLTVMAY). Over 112 to 130 (DRYVAICKPLQYPLVMNHK) the chain is Cytoplasmic. The helical transmembrane segment at 131–151 (VCIQLIIASWTITIPVVIGET) threads the bilayer. Residues 152-188 (CQIFLLPFCGTNTINHFFCDIPPILKLACGNIFVNEI) lie on the Extracellular side of the membrane. The helical transmembrane segment at 189–208 (TVHVVAVVFITVPFLLIVVS) threads the bilayer. The Cytoplasmic portion of the chain corresponds to 209-228 (YGKIISNILKLSSARGKAKA). The chain crosses the membrane as a helical span at residues 229 to 249 (FSTCSSHLIVVILFFGAGTIT). Residues 250 to 262 (YLQPKPHQFQRMG) lie on the Extracellular side of the membrane. Residues 263–283 (KLISLFYTILIPTLNPIIYTL) form a helical membrane-spanning segment. Residues 284–301 (RNKDIMVALRKLLAKLLT) are Cytoplasmic-facing.

This sequence belongs to the G-protein coupled receptor 1 family.

It is found in the cell membrane. In terms of biological role, odorant receptor. In Homo sapiens (Human), this protein is Olfactory receptor 10AG1 (OR10AG1).